The primary structure comprises 108 residues: Translation initiation factor 1A (108 aa).

One can recognise an S1-like domain in the interval 10 to 84 (IRVITPNKKS…EKGDIIYRYT (75 aa)).

It belongs to the eIF-1A family.

Functionally, seems to be required for maximal rate of protein biosynthesis. Enhances ribosome dissociation into subunits and stabilizes the binding of the initiator Met-tRNA(I) to 40 S ribosomal subunits. This Picrophilus torridus (strain ATCC 700027 / DSM 9790 / JCM 10055 / NBRC 100828 / KAW 2/3) protein is Translation initiation factor 1A.